Here is a 467-residue protein sequence, read N- to C-terminus: Tubulointerstitial nephritis antigen-like (467 aa).

Residues 1 to 21 (MWGCPLGLLLLLLAGQAALEA) form the signal peptide. The SMB domain occupies 49–96 (EQDMCCRGRADECALPYLGATCYCDLFCNRTVSDCCPDFWDFCLGIPP). 5 cysteine pairs are disulfide-bonded: cysteine 53–cysteine 72, cysteine 70–cysteine 72, cysteine 70–cysteine 84, cysteine 76–cysteine 83, and cysteine 84–cysteine 91. N-linked (GlcNAc...) asparagine glycosylation is present at asparagine 77. An N-linked (GlcNAc...) asparagine glycan is attached at asparagine 160.

Belongs to the peptidase C1 family. Post-translationally, glycosylated.

The protein resides in the secreted. Functionally, may be implicated in the adrenocortical zonation and in mechanisms for repressing the CYP11B1 gene expression in adrenocortical cells. This is a non catalytic peptidase C1 family protein. This chain is Tubulointerstitial nephritis antigen-like (Tinagl1), found in Rattus norvegicus (Rat).